The sequence spans 202 residues: Dephospho-CoA kinase (202 aa).

A DPCK domain is found at 3-202 (TIGITGGIGS…TKRPNPPDRL (200 aa)). Residue 11–16 (GSGKSV) participates in ATP binding. The interval 138–161 (RAMARDGSSAETMRQRMLSQEREQ) is disordered.

It belongs to the CoaE family.

The protein resides in the cytoplasm. The catalysed reaction is 3'-dephospho-CoA + ATP = ADP + CoA + H(+). It participates in cofactor biosynthesis; coenzyme A biosynthesis; CoA from (R)-pantothenate: step 5/5. In terms of biological role, catalyzes the phosphorylation of the 3'-hydroxyl group of dephosphocoenzyme A to form coenzyme A. The polypeptide is Dephospho-CoA kinase (Porphyromonas gingivalis (strain ATCC BAA-308 / W83)).